The following is a 412-amino-acid chain: Imidazolonepropionase (412 aa).

Fe(3+) contacts are provided by His76 and His78. Positions 76 and 78 each coordinate Zn(2+). The 4-imidazolone-5-propanoate site is built by Arg85, Tyr148, and His181. Tyr148 provides a ligand contact to N-formimidoyl-L-glutamate. A Fe(3+)-binding site is contributed by His242. Residue His242 coordinates Zn(2+). Glu245 provides a ligand contact to 4-imidazolone-5-propanoate. A Fe(3+)-binding site is contributed by Asp317. A Zn(2+)-binding site is contributed by Asp317. Residues Asn319 and Gly321 each contribute to the N-formimidoyl-L-glutamate site. Ser322 serves as a coordination point for 4-imidazolone-5-propanoate.

It belongs to the metallo-dependent hydrolases superfamily. HutI family. Zn(2+) is required as a cofactor. Requires Fe(3+) as cofactor.

The protein resides in the cytoplasm. It carries out the reaction 4-imidazolone-5-propanoate + H2O = N-formimidoyl-L-glutamate. It functions in the pathway amino-acid degradation; L-histidine degradation into L-glutamate; N-formimidoyl-L-glutamate from L-histidine: step 3/3. In terms of biological role, catalyzes the hydrolytic cleavage of the carbon-nitrogen bond in imidazolone-5-propanoate to yield N-formimidoyl-L-glutamate. It is the third step in the universal histidine degradation pathway. The sequence is that of Imidazolonepropionase from Staphylococcus saprophyticus subsp. saprophyticus (strain ATCC 15305 / DSM 20229 / NCIMB 8711 / NCTC 7292 / S-41).